Here is a 490-residue protein sequence, read N- to C-terminus: Betaine aldehyde dehydrogenase (490 aa).

Residue asparagine 93 coordinates K(+). 150–152 serves as a coordination point for NAD(+); it reads GAW. The Charge relay system role is filled by lysine 162. An NAD(+)-binding site is contributed by 176 to 179; sequence KPSE. K(+) is bound at residue valine 180. 230-233 contacts NAD(+); sequence GTAT. Leucine 246 is a K(+) binding site. Glutamate 252 (proton acceptor) is an active-site residue. Glycine 254, cysteine 286, and glutamate 387 together coordinate NAD(+). Cysteine 286 (nucleophile) is an active-site residue. Cysteine 286 carries the post-translational modification Cysteine sulfenic acid (-SOH). K(+) contacts are provided by lysine 457 and glycine 460. Glutamate 464 acts as the Charge relay system in catalysis.

Belongs to the aldehyde dehydrogenase family. In terms of assembly, dimer of dimers. K(+) serves as cofactor.

The enzyme catalyses betaine aldehyde + NAD(+) + H2O = glycine betaine + NADH + 2 H(+). Its pathway is amine and polyamine biosynthesis; betaine biosynthesis via choline pathway; betaine from betaine aldehyde: step 1/1. Its function is as follows. Involved in the biosynthesis of the osmoprotectant glycine betaine. Catalyzes the irreversible oxidation of betaine aldehyde to the corresponding acid. This is Betaine aldehyde dehydrogenase from Xanthomonas euvesicatoria pv. vesicatoria (strain 85-10) (Xanthomonas campestris pv. vesicatoria).